We begin with the raw amino-acid sequence, 115 residues long: Nascent polypeptide-associated complex protein (115 aa).

The region spanning 6-72 (PMNPKQLKKL…SEEEKAIINI (67 aa)) is the NAC-A/B domain.

It belongs to the NAC-alpha family. In terms of assembly, homodimer. Interacts with the ribosome. Binds ribosomal RNA.

Contacts the emerging nascent chain on the ribosome. The sequence is that of Nascent polypeptide-associated complex protein from Pyrococcus horikoshii (strain ATCC 700860 / DSM 12428 / JCM 9974 / NBRC 100139 / OT-3).